The following is a 228-amino-acid chain: Methylthioribulose-1-phosphate dehydratase (228 aa).

Cysteine 92 contacts substrate. Histidine 110 and histidine 112 together coordinate Zn(2+). Catalysis depends on glutamate 135, which acts as the Proton donor/acceptor. Residue histidine 192 coordinates Zn(2+).

It belongs to the aldolase class II family. MtnB subfamily. Zn(2+) is required as a cofactor.

Its subcellular location is the cytoplasm. It localises to the nucleus. It catalyses the reaction 5-(methylsulfanyl)-D-ribulose 1-phosphate = 5-methylsulfanyl-2,3-dioxopentyl phosphate + H2O. The protein operates within amino-acid biosynthesis; L-methionine biosynthesis via salvage pathway; L-methionine from S-methyl-5-thio-alpha-D-ribose 1-phosphate: step 2/6. Catalyzes the dehydration of methylthioribulose-1-phosphate (MTRu-1-P) into 2,3-diketo-5-methylthiopentyl-1-phosphate (DK-MTP-1-P). This Schizosaccharomyces pombe (strain 972 / ATCC 24843) (Fission yeast) protein is Methylthioribulose-1-phosphate dehydratase.